The following is a 275-amino-acid chain: Putative replication protein (275 aa).

The BRCT domain occupies 98–198 (SKAICFTPYD…RILKISEDYF (101 aa)).

This Wigglesworthia glossinidia brevipalpis protein is Putative replication protein.